We begin with the raw amino-acid sequence, 346 residues long: Partitioning defective 6 homolog alpha (346 aa).

An interaction with PRKCI and PRKCZ region spans residues 1–116 (MARPQRTPAR…SNSLQRRKKG (116 aa)). The PB1 domain maps to 15-95 (IVEVKSKFDA…PPLRLLVQKR (81 aa)). Residues 126–253 (RTRPPLLISL…VTVKPANQRN (128 aa)) are interaction with PARD3 and CDC42. In terms of domain architecture, Pseudo-CRIB spans 133 to 150 (ISLPQDFRQVSSVIDVDL). Residues 157 to 250 (RVRLHKHGSD…NLIVTVKPAN (94 aa)) enclose the PDZ domain. Disordered regions lie at residues 257-294 (RGAS…HPPC) and 317-346 (GSSL…GFSL). Position 278 is a phosphoserine (serine 278). Over residues 317-332 (GSSLPSLDSREQANSG) the composition is skewed to polar residues. At serine 345 the chain carries Phosphoserine.

The protein belongs to the PAR6 family. Interacts with PALS1 and CRB3. Interacts with PARD3. Interacts with GTP-bound forms of CDC42, RHOQ/TC10 and RAC1. Interacts with the N-terminal part of PRKCI and PRKCZ. Part of a complex with PARD3, CDC42 or RAC1 and PRKCI or PRKCZ. Part of a complex with LLGL1 and PRKCI. Interacts with MAP2K5. Interacts with TGFBR1; involved in TGF-beta induced epithelial to mesenchymal transition. Interacts with ECT2 ('Thr-359' phosphorylated form) and PRKCI. Interacts with DCTN1 and PCM1. Post-translationally, phosphorylated by the TGF-beta receptor. In terms of processing, ubiquitinated by the SCF(FBXO31) complex, leading to its proteasomal degradation.

It localises to the cytoplasm. The protein resides in the cell membrane. The protein localises to the cell junction. Its subcellular location is the tight junction. It is found in the cytoskeleton. It localises to the microtubule organizing center. The protein resides in the centrosome. The protein localises to the centriolar satellite. Adapter protein involved in asymmetrical cell division and cell polarization processes. Probably involved in the formation of epithelial tight junctions. Association with PARD3 may prevent the interaction of PARD3 with F11R/JAM1, thereby preventing tight junction assembly. The PARD6-PARD3 complex links GTP-bound Rho small GTPases to atypical protein kinase C proteins. Regulates centrosome organization and function. Essential for the centrosomal recruitment of key proteins that control centrosomal microtubule organization. The protein is Partitioning defective 6 homolog alpha (Pard6a) of Rattus norvegicus (Rat).